A 361-amino-acid polypeptide reads, in one-letter code: MTQCPQEMITPGHGIIADALIMHGLIKILHIEGKMEGWAERRGERFVVCAERPDLNWIDQWEPMELLEIAAEFKAKGKDRASEEEEQRPYFGLVHDLSRSTVDPGNFSSWISDVREALYALKADFDLSEEHKEKRGEGRARSKKRGYYTLYLPLSGVYGKYVVENYGIRQSQYAVCATCFALSTLGYIYGTVKARVERRSSSGGGHDVFNLTFIPRERTSLRSLMALQRMAGLVEMRPGDLNELGAVVYMLSVGETIYAVREGVDILVWVTQRAGNFQRTVGVNIFRGDRLLEAIAEIKYRAPSWPKIARQLGSSLNVLGEYLAFGGDVYHVIRSVMADLGRKGGKLAGLEGLAEALKKIG.

As to quaternary structure, monomer. Can form a Cascade complex with Csa5, Cas7, Cas5a, Cas3 and Cas3'.

Functionally, CRISPR (clustered regularly interspaced short palindromic repeat) is an adaptive immune system that provides protection against mobile genetic elements (viruses, transposable elements and conjugative plasmids). CRISPR clusters contain sequences complementary to antecedent mobile elements and target invading nucleic acids. CRISPR clusters are transcribed and processed into CRISPR RNA (crRNA). The chain is CRISPR system associated protein Cas8 (cas8a2) from Thermoproteus tenax (strain ATCC 35583 / DSM 2078 / JCM 9277 / NBRC 100435 / Kra 1).